The primary structure comprises 448 residues: Signal recognition particle protein (448 aa).

Residues 101–108 (GLQGSGKT), 182–186 (DSAGR), and 240–243 (SKFD) contribute to the GTP site.

Belongs to the GTP-binding SRP family. SRP54 subfamily. As to quaternary structure, part of the signal recognition particle protein translocation system, which is composed of SRP and FtsY. SRP is a ribonucleoprotein composed of Ffh and a 4.5S RNA molecule.

The protein localises to the cytoplasm. It carries out the reaction GTP + H2O = GDP + phosphate + H(+). Its function is as follows. Involved in targeting and insertion of nascent membrane proteins into the cytoplasmic membrane. Binds to the hydrophobic signal sequence of the ribosome-nascent chain (RNC) as it emerges from the ribosomes. The SRP-RNC complex is then targeted to the cytoplasmic membrane where it interacts with the SRP receptor FtsY. Interaction with FtsY leads to the transfer of the RNC complex to the Sec translocase for insertion into the membrane, the hydrolysis of GTP by both Ffh and FtsY, and the dissociation of the SRP-FtsY complex into the individual components. The sequence is that of Signal recognition particle protein from Helicobacter pylori (strain ATCC 700392 / 26695) (Campylobacter pylori).